Consider the following 383-residue polypeptide: Pentatricopeptide repeat-containing protein 2, mitochondrial (383 aa).

One copy of the PPR repeat lies at 161 to 195 (TSFNILMDMLFIKGKYKSALEVLIEMKNQNVKFTT). Phosphoserine is present on Ser-377.

The protein belongs to the PTCD2 family.

The protein resides in the mitochondrion. Involved in mitochondrial RNA maturation and mitochondrial respiratory chain function. In Pongo abelii (Sumatran orangutan), this protein is Pentatricopeptide repeat-containing protein 2, mitochondrial (PTCD2).